The sequence spans 373 residues: Response regulator aspartate phosphatase J (373 aa).

2 TPR repeats span residues 99–135 (YYFY…VEDE) and 146–179 (AEVY…GRRR). L-glutamyl-L-arginyl-glycyl-L-methionyl-L-threonine is bound by residues Glu-147, Tyr-150, Gln-181, Asp-192, Tyr-217, Asn-225, His-228, Gln-260, Tyr-297, Lys-300, and Asp-335. TPR repeat units follow at residues 220–253 (AAAY…FEEH) and 259–292 (VQAV…AAEW). Residues 334-367 (EDLLHDTAERFNQLEHYESAAFFYRRLMNIKKKL) form a TPR 5 repeat.

The protein belongs to the Rap family. Monomer in solution. Homodimer.

It is found in the cytoplasm. Inhibited in vitro by the competence and sporulation stimulating factor (CSF), encoded by phrC. However, CSF has at least three targets (RapB, RapC, and RapJ) and the physiological importance of RapJ inhibition by CSF is unknown. Interaction with CSF induces a conformational change in RapJ. Its function is as follows. Involved in the regulation of sporulation. Acts as a phosphatase that specifically dephosphorylates the sporulation initiation phosphotransferase Spo0F and inhibits its activity. This chain is Response regulator aspartate phosphatase J (rapJ), found in Bacillus subtilis (strain 168).